The chain runs to 406 residues: Riboflavin biosynthesis protein RibBA (406 aa).

Residues Met1–Arg209 form a DHBP synthase region. D-ribulose 5-phosphate-binding positions include Arg33–Glu34, Asp38, Arg148–Thr152, and Glu172. Glu34 is a binding site for Mg(2+). His151 contributes to the Mg(2+) binding site. Positions Arg210–Phe406 are GTP cyclohydrolase II. GTP is bound at residue Arg260–Glu264. Residues Cys265, Cys276, and Cys278 each coordinate Zn(2+). GTP contacts are provided by residues Gln281, Glu304–Arg306, and Thr326. The Proton acceptor; for GTP cyclohydrolase activity role is filled by Asp338. Arg340 serves as the catalytic Nucleophile; for GTP cyclohydrolase activity. The GTP site is built by Thr361 and Lys366.

In the N-terminal section; belongs to the DHBP synthase family. This sequence in the C-terminal section; belongs to the GTP cyclohydrolase II family. The cofactor is Mg(2+). Mn(2+) is required as a cofactor. It depends on Zn(2+) as a cofactor.

It carries out the reaction D-ribulose 5-phosphate = (2S)-2-hydroxy-3-oxobutyl phosphate + formate + H(+). It catalyses the reaction GTP + 4 H2O = 2,5-diamino-6-hydroxy-4-(5-phosphoribosylamino)-pyrimidine + formate + 2 phosphate + 3 H(+). Its pathway is cofactor biosynthesis; riboflavin biosynthesis; 2-hydroxy-3-oxobutyl phosphate from D-ribulose 5-phosphate: step 1/1. It functions in the pathway cofactor biosynthesis; riboflavin biosynthesis; 5-amino-6-(D-ribitylamino)uracil from GTP: step 1/4. Functionally, catalyzes the conversion of D-ribulose 5-phosphate to formate and 3,4-dihydroxy-2-butanone 4-phosphate. In terms of biological role, catalyzes the conversion of GTP to 2,5-diamino-6-ribosylamino-4(3H)-pyrimidinone 5'-phosphate (DARP), formate and pyrophosphate. The sequence is that of Riboflavin biosynthesis protein RibBA from Aquifex aeolicus (strain VF5).